The chain runs to 309 residues: Syndecan-1 (309 aa).

Residues 1 to 22 (MRRAALWLWLCALALRLQPVLP) form the signal peptide. The Extracellular segment spans residues 24 to 253 (IMAVNVPPED…GLLDRKEVLG (230 aa)). 2 disordered regions span residues 28 to 57 (NVPPEDQDGSGDDSDNFSGSGTGALPDITL) and 142 to 185 (ARAT…GGTS). The segment covering 32 to 42 (EDQDGSGDDSD) has biased composition (acidic residues). O-linked (Xyl...) (chondroitin sulfate) serine glycosylation occurs at Ser-37. Asn-43 carries N-linked (GlcNAc...) asparagine glycosylation. Ser-45 and Ser-47 each carry an O-linked (Xyl...) (heparan sulfate) serine glycan. Over residues 142–151 (ARATTAQAPV) the composition is skewed to polar residues. Residues Ser-205 and Ser-215 are each glycosylated (O-linked (Xyl...) (chondroitin sulfate) serine). A helical membrane pass occupies residues 254-274 (GVIAGGLVGLIFAVCLVGFML). Residues 275–309 (YRMKKKDEGSYSLEEPKQANGGAYQKPTKQEEFYA) lie on the Cytoplasmic side of the membrane. Residues 283–309 (GSYSLEEPKQANGGAYQKPTKQEEFYA) form a disordered region. Ser-284 carries the phosphoserine modification.

The protein belongs to the syndecan proteoglycan family. In terms of assembly, interacts with CDCP1. Interacts (via C-terminus) with TIAM1 (via PDZ domain). Interacts with MDK. Post-translationally, shedding is enhanced by a number of factors such as heparanase, thrombin or EGF. Also by stress and wound healing. PMA-mediated shedding is inhibited by TIMP3.

The protein resides in the membrane. It localises to the secreted. The protein localises to the extracellular exosome. In terms of biological role, cell surface proteoglycan that contains both heparan sulfate and chondroitin sulfate and that links the cytoskeleton to the interstitial matrix. Regulates exosome biogenesis in concert with SDCBP and PDCD6IP. Able to induce its own expression in dental mesenchymal cells and also in the neighboring dental epithelial cells via an MSX1-mediated pathway. The chain is Syndecan-1 from Cricetulus griseus (Chinese hamster).